The sequence spans 607 residues: Putative pentatricopeptide repeat-containing protein At1g09680 (607 aa).

PPR repeat units follow at residues 239-273 (NVYVFNILMNKFCKEGNISDAQKVFDEITKRSLQP), 274-308 (TVVSFNTLINGYCKVGNLDEGFRLKHQMEKSRTRP), 309-343 (DVFTYSALINALCKENKMDGAHGLFDEMCKRGLIP), 344-378 (NDVIFTTLIHGHSRNGEIDLMKESYQKMLSKGLQP), 379-413 (DIVLYNTLVNGFCKNGDLVAARNIVDGMIRRGLRP), 414-448 (DKITYTTLIDGFCRGGDVETALEIRKEMDQNGIEL), 449-483 (DRVGFSALVCGMCKEGRVIDAERALREMLRAGIKP), 484-518 (DDVTYTMMMDAFCKKGDAQTGFKLLKEMQSDGHVP), and 519-553 (SVVTYNVLLNGLCKLGQMKNADMLLDAMLNIGVVP).

It belongs to the PPR family. P subfamily.

This chain is Putative pentatricopeptide repeat-containing protein At1g09680, found in Arabidopsis thaliana (Mouse-ear cress).